Reading from the N-terminus, the 500-residue chain is Guanosine-5'-triphosphate,3'-diphosphate pyrophosphatase (500 aa).

Belongs to the GppA/Ppx family. GppA subfamily.

The catalysed reaction is guanosine 3'-diphosphate 5'-triphosphate + H2O = guanosine 3',5'-bis(diphosphate) + phosphate + H(+). The protein operates within purine metabolism; ppGpp biosynthesis; ppGpp from GTP: step 2/2. Its function is as follows. Catalyzes the conversion of pppGpp to ppGpp. Guanosine pentaphosphate (pppGpp) is a cytoplasmic signaling molecule which together with ppGpp controls the 'stringent response', an adaptive process that allows bacteria to respond to amino acid starvation, resulting in the coordinated regulation of numerous cellular activities. This Photorhabdus laumondii subsp. laumondii (strain DSM 15139 / CIP 105565 / TT01) (Photorhabdus luminescens subsp. laumondii) protein is Guanosine-5'-triphosphate,3'-diphosphate pyrophosphatase.